We begin with the raw amino-acid sequence, 134 residues long: Methylglyoxal synthase (134 aa).

The region spanning 1-134 (MKIALIAHDR…DWRLIQERRN (134 aa)) is the MGS-like domain. Residues His-8, Lys-12, 34–37 (TGTT), and 54–55 (SG) contribute to the substrate site. Asp-60 functions as the Proton donor/acceptor in the catalytic mechanism. His-87 contributes to the substrate binding site.

This sequence belongs to the methylglyoxal synthase family.

It catalyses the reaction dihydroxyacetone phosphate = methylglyoxal + phosphate. Its function is as follows. Catalyzes the formation of methylglyoxal from dihydroxyacetone phosphate. The chain is Methylglyoxal synthase from Lysinibacillus sphaericus (strain C3-41).